The sequence spans 248 residues: tRNA pseudouridine synthase A (248 aa).

The active-site Nucleophile is D53. Y111 is a substrate binding site.

Belongs to the tRNA pseudouridine synthase TruA family. As to quaternary structure, homodimer.

It catalyses the reaction uridine(38/39/40) in tRNA = pseudouridine(38/39/40) in tRNA. Formation of pseudouridine at positions 38, 39 and 40 in the anticodon stem and loop of transfer RNAs. The chain is tRNA pseudouridine synthase A from Listeria welshimeri serovar 6b (strain ATCC 35897 / DSM 20650 / CCUG 15529 / CIP 8149 / NCTC 11857 / SLCC 5334 / V8).